The sequence spans 348 residues: Nicotinate-nucleotide--dimethylbenzimidazole phosphoribosyltransferase (348 aa).

Glu316 functions as the Proton acceptor in the catalytic mechanism.

Belongs to the CobT family.

The enzyme catalyses 5,6-dimethylbenzimidazole + nicotinate beta-D-ribonucleotide = alpha-ribazole 5'-phosphate + nicotinate + H(+). Its pathway is nucleoside biosynthesis; alpha-ribazole biosynthesis; alpha-ribazole from 5,6-dimethylbenzimidazole: step 1/2. In terms of biological role, catalyzes the synthesis of alpha-ribazole-5'-phosphate from nicotinate mononucleotide (NAMN) and 5,6-dimethylbenzimidazole (DMB). This Xanthomonas campestris pv. campestris (strain 8004) protein is Nicotinate-nucleotide--dimethylbenzimidazole phosphoribosyltransferase.